We begin with the raw amino-acid sequence, 370 residues long: MQQDKINLLGLNQKAIEDFFISIGEKKFHARQVFKWIHKKGVIDFDSMTDLGKNLRNKLKENAEIVIPKVVFNKASKDGTHKWLIDVGGSAVETVFIPEEGRGTLCVSSQVGCTLNCSFCSTGKQGFNRNLSSAEVISQLWIAARTLSKNNGEHDFSVTNIVMMGMGEPLMNFENVVPAMDIMMDDLAYGLSRRKVTLSTSGVVPRIYDLLEQSGVSLAVSLHAPTDSLRNEIVPINKKYNIDELLEACKLYAEKGPHKHITFEYTLMEEVNDNLSDAEQLIELLRSREVPAKINLIPFNPYPGTPYRKPSNNRIHRFKEFLQHNGFVTTVRKTRGDDIDAACGQLAGDVMDKTKRKERYLKKLGDKNAI.

Glu-93 functions as the Proton acceptor in the catalytic mechanism. The region spanning 99-337 (EEGRGTLCVS…VTTVRKTRGD (239 aa)) is the Radical SAM core domain. Cys-106 and Cys-343 are joined by a disulfide. Residues Cys-113, Cys-117, and Cys-120 each coordinate [4Fe-4S] cluster. S-adenosyl-L-methionine is bound by residues 167–168 (GE), Ser-199, 221–223 (SLH), and Asn-300. Cys-343 acts as the S-methylcysteine intermediate in catalysis.

The protein belongs to the radical SAM superfamily. RlmN family. [4Fe-4S] cluster is required as a cofactor.

Its subcellular location is the cytoplasm. The enzyme catalyses adenosine(2503) in 23S rRNA + 2 reduced [2Fe-2S]-[ferredoxin] + 2 S-adenosyl-L-methionine = 2-methyladenosine(2503) in 23S rRNA + 5'-deoxyadenosine + L-methionine + 2 oxidized [2Fe-2S]-[ferredoxin] + S-adenosyl-L-homocysteine. It carries out the reaction adenosine(37) in tRNA + 2 reduced [2Fe-2S]-[ferredoxin] + 2 S-adenosyl-L-methionine = 2-methyladenosine(37) in tRNA + 5'-deoxyadenosine + L-methionine + 2 oxidized [2Fe-2S]-[ferredoxin] + S-adenosyl-L-homocysteine. Specifically methylates position 2 of adenine 2503 in 23S rRNA and position 2 of adenine 37 in tRNAs. m2A2503 modification seems to play a crucial role in the proofreading step occurring at the peptidyl transferase center and thus would serve to optimize ribosomal fidelity. The sequence is that of Dual-specificity RNA methyltransferase RlmN from Francisella philomiragia subsp. philomiragia (strain ATCC 25017 / CCUG 19701 / FSC 153 / O#319-036).